Reading from the N-terminus, the 146-residue chain is MKLFELQPAPGSKKLPKRKGRGHGTGNGKTAGRGHKGQNARSGGGVRPGFEGGQMPLYRRVPKRGFTNIFSKVYTEVNVSALNAFDDGTVVTQELLKEKGIIKKINDGVVILGNGELKKKLTVKAARFSKTAAEKIEAAGGKVEVI.

Residues 1 to 57 form a disordered region; sequence MKLFELQPAPGSKKLPKRKGRGHGTGNGKTAGRGHKGQNARSGGGVRPGFEGGQMPL. The segment covering 42 to 52 has biased composition (gly residues); that stretch reads SGGGVRPGFEG.

This sequence belongs to the universal ribosomal protein uL15 family. In terms of assembly, part of the 50S ribosomal subunit.

In terms of biological role, binds to the 23S rRNA. The chain is Large ribosomal subunit protein uL15 from Acetivibrio thermocellus (strain ATCC 27405 / DSM 1237 / JCM 9322 / NBRC 103400 / NCIMB 10682 / NRRL B-4536 / VPI 7372) (Clostridium thermocellum).